A 378-amino-acid polypeptide reads, in one-letter code: D-alanine--D-alanine ligase (378 aa).

An ATP-grasp domain is found at 149–374 (KVLLAAAGIP…YTDLITKLIE (226 aa)). 189–247 (EAGLQYPLFVKPSRAGSSFGVTKVEHEGDAAELAAAVYEASRHDWRILVEQGIDAREIE) is an ATP binding site. The Mg(2+) site is built by aspartate 328, glutamate 341, and asparagine 343.

Belongs to the D-alanine--D-alanine ligase family. It depends on Mg(2+) as a cofactor. Mn(2+) is required as a cofactor.

Its subcellular location is the cytoplasm. The enzyme catalyses 2 D-alanine + ATP = D-alanyl-D-alanine + ADP + phosphate + H(+). The protein operates within cell wall biogenesis; peptidoglycan biosynthesis. Cell wall formation. This is D-alanine--D-alanine ligase from Bifidobacterium adolescentis (strain ATCC 15703 / DSM 20083 / NCTC 11814 / E194a).